Reading from the N-terminus, the 106-residue chain is Small ribosomal subunit protein uS10 (106 aa).

This sequence belongs to the universal ribosomal protein uS10 family. Part of the 30S ribosomal subunit.

Functionally, involved in the binding of tRNA to the ribosomes. The sequence is that of Small ribosomal subunit protein uS10 from Caldicellulosiruptor saccharolyticus (strain ATCC 43494 / DSM 8903 / Tp8T 6331).